A 567-amino-acid polypeptide reads, in one-letter code: WD repeat-containing protein 20 (567 aa).

N-acetylalanine is present on Ala-2. 4 WD repeats span residues 147 to 187 (IDKS…GTTA), 216 to 257 (VGEG…GTMK), 258 to 297 (SYFG…VIAR), and 345 to 389 (STQS…LFPH). Phosphoserine occurs at positions 355 and 358. A disordered region spans residues 408–441 (PAGSNGSAVTTPGNSVPPPLPRSNSLPHSAVSNA). Composition is skewed to polar residues over residues 411 to 421 (SNGSAVTTPGN) and 429 to 441 (RSNS…VSNA). Phosphoserine is present on residues Ser-430, Ser-432, and Ser-463. Residues 468–481 (KERHHEKDRKRNHS) are compositionally biased toward basic residues. A disordered region spans residues 468 to 493 (KERHHEKDRKRNHSMGHISSKSSDKL). A WD 5 repeat occupies 529 to 566 (IAHERLTVLVFLEDCIVTACQEGFICTWARPGKVSKFQ).

As to quaternary structure, interacts with USP12; promotes translocation of USP12/WDR20 to the plasma membrane. Component of the USP12/WDR20/WDR48 deubiquitinating complex. Interacts with USP46; contributes to the cytoplasmic localization of the USP46/WDR20 complex. Component of the USP12/DMWD/WDR48 deubiquitinating complex.

The protein resides in the cytoplasm. It is found in the nucleus. Its function is as follows. Regulator of deubiquitinating complexes. Activates deubiquitinating activity of complexes containing USP12. Anchors at the base of the ubiquitin-contacting loop of USP12 and remotely modulates the catalytic center of the enzyme. Regulates shuttling of complexes containing USP12 between the plasma membrane, cytoplasm and nucleus. This chain is WD repeat-containing protein 20 (Wdr20), found in Mus musculus (Mouse).